Here is a 356-residue protein sequence, read N- to C-terminus: Histidinol-phosphate aminotransferase (356 aa).

Lys214 carries the N6-(pyridoxal phosphate)lysine modification.

It belongs to the class-II pyridoxal-phosphate-dependent aminotransferase family. Histidinol-phosphate aminotransferase subfamily. In terms of assembly, homodimer. Pyridoxal 5'-phosphate serves as cofactor.

It catalyses the reaction L-histidinol phosphate + 2-oxoglutarate = 3-(imidazol-4-yl)-2-oxopropyl phosphate + L-glutamate. Its pathway is amino-acid biosynthesis; L-histidine biosynthesis; L-histidine from 5-phospho-alpha-D-ribose 1-diphosphate: step 7/9. This is Histidinol-phosphate aminotransferase from Escherichia coli O81 (strain ED1a).